The sequence spans 426 residues: Kelch repeat-containing protein At3g27220 (426 aa).

The chain crosses the membrane as a helical span at residues Leu-18 to Cys-38. Kelch repeat units lie at residues Leu-123–Asp-170, Tyr-173–Gly-222, Leu-224–Asp-275, Lys-276–Val-338, and Ser-341–Gly-394.

It is found in the membrane. The chain is Kelch repeat-containing protein At3g27220 from Arabidopsis thaliana (Mouse-ear cress).